A 745-amino-acid chain; its full sequence is Protein PHOX1 (745 aa).

A compositionally biased stretch (basic residues) spans 1-10 (MGKPTGKKKN). Residues 1 to 37 (MGKPTGKKKNNNYTEMPPTESSTTGGGKTGKSFDRSA) are disordered. 3 TPR repeats span residues 52–85 (ALEL…LPRD), 90–125 (AYLR…SPRF), and 126–159 (SKAL…EPEN). One can recognise a PB1 domain in the interval 280 to 359 (TRTVKLVHGD…GSFRLYIAEV (80 aa)). 4 TPR repeats span residues 406–441 (EHWI…YTEA), 443–472 (EDIV…AMFN), 494–528 (ETIL…KSDF), and 553–586 (GEVD…WEEM).

Interacts with myosin XI-1 and XI-K.

It localises to the cytoplasmic vesicle membrane. Its function is as follows. Carboxylate clamp type tetratricopeptide repeat protein that may act as a potential Hsp90/Hsp70 co-chaperone. Contributes to polar growth of root hairs. The sequence is that of Protein PHOX1 from Arabidopsis thaliana (Mouse-ear cress).